The chain runs to 319 residues: 3-oxoacyl-[acyl-carrier-protein] reductase, chloroplastic (319 aa).

A chloroplast-targeting transit peptide spans 1–57 (MAAAVAAPRLISLKAVAKLGFREISQIRQLAPLHSAIPHFGMLRCRSRQPFSTSVVK). An N-acetylalanine modification is found at alanine 58. NADP(+) is bound at residue 81-105 (ITGASRGIGKAIALALGKAGCKVLV). Serine 213 is a binding site for substrate. Tyrosine 226 functions as the Proton acceptor in the catalytic mechanism.

This sequence belongs to the short-chain dehydrogenases/reductases (SDR) family. In terms of assembly, homotetramer.

The protein localises to the plastid. Its subcellular location is the chloroplast. It catalyses the reaction a (3R)-hydroxyacyl-[ACP] + NADP(+) = a 3-oxoacyl-[ACP] + NADPH + H(+). The protein operates within lipid metabolism; fatty acid biosynthesis. This Arabidopsis thaliana (Mouse-ear cress) protein is 3-oxoacyl-[acyl-carrier-protein] reductase, chloroplastic.